The chain runs to 208 residues: Protein GrpE (208 aa).

A compositionally biased stretch (basic and acidic residues) spans 1–12 (MTNKDESVEKNT). Residues 1 to 59 (MTNKDESVEKNTESTVEETNIKQNIDDSVEQAEESKGHLQDEAIEETSDENVIEEIDPK) are disordered. The span at 13–23 (ESTVEETNIKQ) shows a compositional bias: polar residues. The span at 42–55 (EAIEETSDENVIEE) shows a compositional bias: acidic residues.

The protein belongs to the GrpE family. In terms of assembly, homodimer.

It is found in the cytoplasm. Functionally, participates actively in the response to hyperosmotic and heat shock by preventing the aggregation of stress-denatured proteins, in association with DnaK and GrpE. It is the nucleotide exchange factor for DnaK and may function as a thermosensor. Unfolded proteins bind initially to DnaJ; upon interaction with the DnaJ-bound protein, DnaK hydrolyzes its bound ATP, resulting in the formation of a stable complex. GrpE releases ADP from DnaK; ATP binding to DnaK triggers the release of the substrate protein, thus completing the reaction cycle. Several rounds of ATP-dependent interactions between DnaJ, DnaK and GrpE are required for fully efficient folding. The protein is Protein GrpE of Staphylococcus aureus (strain Mu3 / ATCC 700698).